The primary structure comprises 52 residues: Light-harvesting protein B-870 alpha chain (52 aa).

Residues 1–15 are Cytoplasmic-facing; it reads MAKFYKIWLIFDPRR. Residues 16 to 36 form a helical membrane-spanning segment; sequence VFVAQGVFLFLLAAMIHLVVL. His-32 is an a bacteriochlorophyll binding site. Topologically, residues 37–52 are periplasmic; sequence SSGLNWFEAAAAVGGQ.

The protein belongs to the antenna complex alpha subunit family. As to quaternary structure, the core complex is formed by different alpha and beta chains, binding bacteriochlorophyll molecules, and arranged most probably in tetrameric structures disposed around the reaction center. The non-pigmented gamma chains may constitute additional components.

The protein resides in the cell inner membrane. In terms of biological role, antenna complexes are light-harvesting systems, which transfer the excitation energy to the reaction centers. This chain is Light-harvesting protein B-870 alpha chain (pufA), found in Roseobacter denitrificans (strain ATCC 33942 / OCh 114) (Erythrobacter sp. (strain OCh 114)).